Reading from the N-terminus, the 210-residue chain is MADS-box protein AeAP3-2 (210 aa).

Residues 1-36 enclose the MADS-box domain; sequence GGLLKKARELAILCDAQLGVIIFSSSGKMFEFSSPP. Residues 59-149 form the K-box domain; sequence NQQVYCEITR…YRVIQDHHAA (91 aa).

As to expression, expressed exclusively in the carpel.

It is found in the nucleus. Probable transcription factor. This chain is MADS-box protein AeAP3-2 (AP3-2), found in Asarum europaeum (Asarabacca).